The sequence spans 392 residues: Formate-dependent phosphoribosylglycinamide formyltransferase (392 aa).

Residues 22–23 and Glu82 contribute to the N(1)-(5-phospho-beta-D-ribosyl)glycinamide site; that span reads EL. ATP-binding positions include Arg114, Lys155, 160–165, 195–198, and Glu203; these read SSGHGQ and EGFI. The 189-residue stretch at 119 to 307 folds into the ATP-grasp domain; sequence RLAAEELGLK…QFALHARAIL (189 aa). Glu266 and Glu278 together coordinate Mg(2+). Residues Asp285, Lys355, and 362–363 each bind N(1)-(5-phospho-beta-D-ribosyl)glycinamide; that span reads RR.

Belongs to the PurK/PurT family. In terms of assembly, homodimer.

It is found in the cell inner membrane. The catalysed reaction is N(1)-(5-phospho-beta-D-ribosyl)glycinamide + formate + ATP = N(2)-formyl-N(1)-(5-phospho-beta-D-ribosyl)glycinamide + ADP + phosphate + H(+). It functions in the pathway purine metabolism; IMP biosynthesis via de novo pathway; N(2)-formyl-N(1)-(5-phospho-D-ribosyl)glycinamide from N(1)-(5-phospho-D-ribosyl)glycinamide (formate route): step 1/1. Involved in the de novo purine biosynthesis. Catalyzes the transfer of formate to 5-phospho-ribosyl-glycinamide (GAR), producing 5-phospho-ribosyl-N-formylglycinamide (FGAR). Formate is provided by PurU via hydrolysis of 10-formyl-tetrahydrofolate. The sequence is that of Formate-dependent phosphoribosylglycinamide formyltransferase from Mannheimia haemolytica (Pasteurella haemolytica).